Reading from the N-terminus, the 314-residue chain is Ribosomal protein L11 methyltransferase (314 aa).

S-adenosyl-L-methionine contacts are provided by threonine 161, glycine 182, aspartate 204, and asparagine 248.

This sequence belongs to the methyltransferase superfamily. PrmA family.

The protein localises to the cytoplasm. It catalyses the reaction L-lysyl-[protein] + 3 S-adenosyl-L-methionine = N(6),N(6),N(6)-trimethyl-L-lysyl-[protein] + 3 S-adenosyl-L-homocysteine + 3 H(+). Methylates ribosomal protein L11. The polypeptide is Ribosomal protein L11 methyltransferase (Listeria innocua serovar 6a (strain ATCC BAA-680 / CLIP 11262)).